A 366-amino-acid chain; its full sequence is DNA polymerase IV (366 aa).

One can recognise a UmuC domain in the interval Ile6–Gly197. Mg(2+) contacts are provided by Asp10 and Asp114. The active site involves Glu115.

This sequence belongs to the DNA polymerase type-Y family. Monomer. The cofactor is Mg(2+).

It is found in the cytoplasm. It catalyses the reaction DNA(n) + a 2'-deoxyribonucleoside 5'-triphosphate = DNA(n+1) + diphosphate. Functionally, poorly processive, error-prone DNA polymerase involved in untargeted mutagenesis. Copies undamaged DNA at stalled replication forks, which arise in vivo from mismatched or misaligned primer ends. These misaligned primers can be extended by PolIV. Exhibits no 3'-5' exonuclease (proofreading) activity. May be involved in translesional synthesis. The chain is DNA polymerase IV from Methanosarcina acetivorans (strain ATCC 35395 / DSM 2834 / JCM 12185 / C2A).